A 447-amino-acid polypeptide reads, in one-letter code: Na(+)-translocating NADH-quinone reductase subunit A (447 aa).

The protein belongs to the NqrA family. Composed of six subunits; NqrA, NqrB, NqrC, NqrD, NqrE and NqrF.

It carries out the reaction a ubiquinone + n Na(+)(in) + NADH + H(+) = a ubiquinol + n Na(+)(out) + NAD(+). Its function is as follows. NQR complex catalyzes the reduction of ubiquinone-1 to ubiquinol by two successive reactions, coupled with the transport of Na(+) ions from the cytoplasm to the periplasm. NqrA to NqrE are probably involved in the second step, the conversion of ubisemiquinone to ubiquinol. The polypeptide is Na(+)-translocating NADH-quinone reductase subunit A (Yersinia pseudotuberculosis serotype O:1b (strain IP 31758)).